We begin with the raw amino-acid sequence, 1342 residues long: DNA-directed RNA polymerase subunit beta (1342 aa).

This sequence belongs to the RNA polymerase beta chain family. In terms of assembly, the RNAP catalytic core consists of 2 alpha, 1 beta, 1 beta' and 1 omega subunit. When a sigma factor is associated with the core the holoenzyme is formed, which can initiate transcription.

It catalyses the reaction RNA(n) + a ribonucleoside 5'-triphosphate = RNA(n+1) + diphosphate. Functionally, DNA-dependent RNA polymerase catalyzes the transcription of DNA into RNA using the four ribonucleoside triphosphates as substrates. This is DNA-directed RNA polymerase subunit beta from Salmonella typhimurium (strain LT2 / SGSC1412 / ATCC 700720).